A 549-amino-acid chain; its full sequence is Hydroxylamine reductase (549 aa).

Residues C5, C8, C17, and C23 each contribute to the [4Fe-4S] cluster site. H244, E268, C312, C403, C431, C456, E491, and K493 together coordinate hybrid [4Fe-2O-2S] cluster. C403 is subject to Cysteine persulfide.

The protein belongs to the HCP family. [4Fe-4S] cluster serves as cofactor. It depends on hybrid [4Fe-2O-2S] cluster as a cofactor.

The protein resides in the cytoplasm. The enzyme catalyses A + NH4(+) + H2O = hydroxylamine + AH2 + H(+). In terms of biological role, catalyzes the reduction of hydroxylamine to form NH(3) and H(2)O. The chain is Hydroxylamine reductase from Clostridium perfringens (strain 13 / Type A).